Reading from the N-terminus, the 882-residue chain is Alanine--tRNA ligase (882 aa).

Positions 570, 574, 672, and 676 each coordinate Zn(2+).

This sequence belongs to the class-II aminoacyl-tRNA synthetase family. Requires Zn(2+) as cofactor.

The protein localises to the cytoplasm. The catalysed reaction is tRNA(Ala) + L-alanine + ATP = L-alanyl-tRNA(Ala) + AMP + diphosphate. In terms of biological role, catalyzes the attachment of alanine to tRNA(Ala) in a two-step reaction: alanine is first activated by ATP to form Ala-AMP and then transferred to the acceptor end of tRNA(Ala). Also edits incorrectly charged Ser-tRNA(Ala) and Gly-tRNA(Ala) via its editing domain. In Xanthomonas campestris pv. campestris (strain ATCC 33913 / DSM 3586 / NCPPB 528 / LMG 568 / P 25), this protein is Alanine--tRNA ligase.